The chain runs to 672 residues: ATP-dependent zinc metalloprotease FtsH 1 (672 aa).

Residues 1–22 (MKKDSESNSSDKSNKEELSTGR) form a disordered region. Topologically, residues 1-23 (MKKDSESNSSDKSNKEELSTGRR) are cytoplasmic. A helical transmembrane segment spans residues 24–44 (GGNPMIIALVITVLAAMLFFN). Over 45-141 (QPEPSSLISA…KFSPPDNTAA (97 aa)) the chain is Periplasmic. The chain crosses the membrane as a helical span at residues 142–162 (ILNLLILVGLPLAIFFFIFMM). Residues 163 to 672 (IRRTRNDMMG…TSNASARRED (510 aa)) are Cytoplasmic-facing. 237–244 (GPPGTGKT) contacts ATP. Residue histidine 458 participates in Zn(2+) binding. Glutamate 459 is a catalytic residue. Residues histidine 462 and aspartate 534 each contribute to the Zn(2+) site. Residues 642–672 (RLGDEEGKVEQIMAPEGAAERTSNASARRED) are disordered. Residues 662-672 (RTSNASARRED) show a composition bias toward polar residues.

This sequence in the central section; belongs to the AAA ATPase family. The protein in the C-terminal section; belongs to the peptidase M41 family. Homohexamer. Zn(2+) is required as a cofactor.

It localises to the cell inner membrane. Acts as a processive, ATP-dependent zinc metallopeptidase for both cytoplasmic and membrane proteins. Plays a role in the quality control of integral membrane proteins. In Rhodopirellula baltica (strain DSM 10527 / NCIMB 13988 / SH1), this protein is ATP-dependent zinc metalloprotease FtsH 1.